Here is a 57-residue protein sequence, read N- to C-terminus: Large ribosomal subunit protein bL32 (57 aa).

The segment at 1 to 38 is disordered; that stretch reads MAVQQNKPTRSKRGMRRSHDALTAVTSLSVDKTSGEKH.

This sequence belongs to the bacterial ribosomal protein bL32 family.

In Escherichia coli O7:K1 (strain IAI39 / ExPEC), this protein is Large ribosomal subunit protein bL32.